A 309-amino-acid chain; its full sequence is Olfactory receptor 5B21 (309 aa).

The Extracellular portion of the chain corresponds to 1-26 (MENSTEVTEFILLGLTDDPNLQIPLL). The N-linked (GlcNAc...) asparagine glycan is linked to N3. The helical transmembrane segment at 27–47 (LAFLFIYLITLLGNGGMMVII) threads the bilayer. The Cytoplasmic segment spans residues 48 to 55 (HSDSHLHT). The chain crosses the membrane as a helical span at residues 56–76 (PMYFFLSNLSLVDLGYSSAVA). Residues 77–95 (PKTVAALRSGDKAISYDGC) lie on the Extracellular side of the membrane. Residues C95 and C177 are joined by a disulfide bond. A helical transmembrane segment spans residues 96–116 (AAQFFFFVGFATVECYLLASM). Over 117–137 (AYDRHAAVCRPLHYTTTMTAG) the chain is Cytoplasmic. The chain crosses the membrane as a helical span at residues 138 to 158 (VCALLATGSYVSGFLNASIHA). At 159–199 (AGTFRLSFCGSNEINHFFCDIPPLLALSCSDTRISKLVVFV) the chain is on the extracellular side. Residues 200–220 (AGFNVFFTLLVILISYFFICI) form a helical membrane-spanning segment. At 221–235 (TIQRMHSAEGQKKVF) the chain is on the cytoplasmic side. Residues 236 to 256 (STCASHLTALSIFYGTIIFMY) traverse the membrane as a helical segment. Residues 257–270 (LQPNSSQSVDTDKI) lie on the Extracellular side of the membrane. N260 carries N-linked (GlcNAc...) asparagine glycosylation. The helical transmembrane segment at 271-291 (ASVFYTVVIPMLNPLIYSLRN) threads the bilayer. Over 292–309 (KEVKSALWKILNKLYPQY) the chain is Cytoplasmic.

It belongs to the G-protein coupled receptor 1 family.

It is found in the cell membrane. In terms of biological role, odorant receptor. The polypeptide is Olfactory receptor 5B21 (Homo sapiens (Human)).